Reading from the N-terminus, the 118-residue chain is uncharacterized protein (118 aa).

The region spanning 6–104 (CGFEVTKEVI…WGGYYAEQEY (99 aa)) is the HTH hxlR-type domain.

This is an uncharacterized protein from Bacillus subtilis (strain 168).